A 210-amino-acid polypeptide reads, in one-letter code: Imidazole glycerol phosphate synthase subunit HisH (210 aa).

A Glutamine amidotransferase type-1 domain is found at 1 to 205 (MIAVINYGAG…VELALSRGSG (205 aa)). Residue Cys79 is the Nucleophile of the active site. Active-site residues include His180 and Glu182.

Heterodimer of HisH and HisF.

Its subcellular location is the cytoplasm. It catalyses the reaction 5-[(5-phospho-1-deoxy-D-ribulos-1-ylimino)methylamino]-1-(5-phospho-beta-D-ribosyl)imidazole-4-carboxamide + L-glutamine = D-erythro-1-(imidazol-4-yl)glycerol 3-phosphate + 5-amino-1-(5-phospho-beta-D-ribosyl)imidazole-4-carboxamide + L-glutamate + H(+). The catalysed reaction is L-glutamine + H2O = L-glutamate + NH4(+). It participates in amino-acid biosynthesis; L-histidine biosynthesis; L-histidine from 5-phospho-alpha-D-ribose 1-diphosphate: step 5/9. IGPS catalyzes the conversion of PRFAR and glutamine to IGP, AICAR and glutamate. The HisH subunit catalyzes the hydrolysis of glutamine to glutamate and ammonia as part of the synthesis of IGP and AICAR. The resulting ammonia molecule is channeled to the active site of HisF. This chain is Imidazole glycerol phosphate synthase subunit HisH, found in Herpetosiphon aurantiacus (strain ATCC 23779 / DSM 785 / 114-95).